Here is a 134-residue protein sequence, read N- to C-terminus: Large ribosomal subunit protein uL14 (134 aa).

This sequence belongs to the universal ribosomal protein uL14 family. In terms of assembly, in the 70S ribosome, L14 and L19 interact and together make contacts with the 16S rRNA in bridges B5 and B8. Part of the 50S ribosomal subunit. Forms a cluster with proteins L3 and L19.

In terms of biological role, forms part of two intersubunit bridges in the 70S ribosome. Binds to 23S rRNA. The chain is Large ribosomal subunit protein uL14 from Deinococcus radiodurans (strain ATCC 13939 / DSM 20539 / JCM 16871 / CCUG 27074 / LMG 4051 / NBRC 15346 / NCIMB 9279 / VKM B-1422 / R1).